We begin with the raw amino-acid sequence, 161 residues long: Protein UXT homolog (161 aa).

It belongs to the UXT family.

This is Protein UXT homolog from Dictyostelium discoideum (Social amoeba).